A 390-amino-acid polypeptide reads, in one-letter code: Succinate--CoA ligase [ADP-forming] subunit beta (390 aa).

The ATP-grasp domain occupies 9-244 (KSLFQQYGIP…ISQEDVREAK (236 aa)). Lysine 46, glutamate 99, leucine 102, and glutamate 107 together coordinate ATP. Residues asparagine 199 and aspartate 213 each coordinate Mg(2+). Residues asparagine 264 and 321–323 (GIV) each bind substrate.

This sequence belongs to the succinate/malate CoA ligase beta subunit family. In terms of assembly, heterotetramer of two alpha and two beta subunits. Mg(2+) serves as cofactor.

The enzyme catalyses succinate + ATP + CoA = succinyl-CoA + ADP + phosphate. It catalyses the reaction GTP + succinate + CoA = succinyl-CoA + GDP + phosphate. Its pathway is carbohydrate metabolism; tricarboxylic acid cycle; succinate from succinyl-CoA (ligase route): step 1/1. In terms of biological role, succinyl-CoA synthetase functions in the citric acid cycle (TCA), coupling the hydrolysis of succinyl-CoA to the synthesis of either ATP or GTP and thus represents the only step of substrate-level phosphorylation in the TCA. The beta subunit provides nucleotide specificity of the enzyme and binds the substrate succinate, while the binding sites for coenzyme A and phosphate are found in the alpha subunit. The protein is Succinate--CoA ligase [ADP-forming] subunit beta of Hydrogenovibrio crunogenus (strain DSM 25203 / XCL-2) (Thiomicrospira crunogena).